The primary structure comprises 477 residues: C4-dicarboxylate transport protein 1 (477 aa).

Transmembrane regions (helical) follow at residues Pro21–Tyr39, Met59–Met76, Ala89–Ile111, Ile162–Val179, Leu200–Gly221, Leu231–Val253, Val342–Val364, and Ala368–Val387. The tract at residues Ser435–Arg477 is disordered.

The protein belongs to the dicarboxylate/amino acid:cation symporter (DAACS) (TC 2.A.23) family.

Its subcellular location is the cell inner membrane. In terms of biological role, responsible for the transport of dicarboxylates such as succinate, fumarate, and malate from the periplasm across the membrane. This transport system plays an important role in the energy supply of rhizobium-legume symbionts. This chain is C4-dicarboxylate transport protein 1 (dctA1), found in Mesorhizobium japonicum (strain LMG 29417 / CECT 9101 / MAFF 303099) (Mesorhizobium loti (strain MAFF 303099)).